A 263-amino-acid chain; its full sequence is Orotidine 5'-phosphate decarboxylase (263 aa).

Substrate is bound by residues Asp-36, 58–60 (KTH), 90–99 (DRKFADIGNT), Tyr-216, and Arg-234. Catalysis depends on Lys-92, which acts as the Proton donor.

It belongs to the OMP decarboxylase family.

It carries out the reaction orotidine 5'-phosphate + H(+) = UMP + CO2. Its pathway is pyrimidine metabolism; UMP biosynthesis via de novo pathway; UMP from orotate: step 2/2. In Komagataella pastoris (Yeast), this protein is Orotidine 5'-phosphate decarboxylase (URA3).